The following is an 84-amino-acid chain: Small ribosomal subunit protein bS20 (84 aa).

The protein belongs to the bacterial ribosomal protein bS20 family.

Its function is as follows. Binds directly to 16S ribosomal RNA. The chain is Small ribosomal subunit protein bS20 from Porphyromonas gingivalis (strain ATCC 33277 / DSM 20709 / CIP 103683 / JCM 12257 / NCTC 11834 / 2561).